Here is a 621-residue protein sequence, read N- to C-terminus: MNLQRRKFVRLDSTGVDGKLKSVRGRLKKVYGKMKTLENWRKTVLLACVVALAIDPLFLFIPLIDSQRFCFTFDKTLVAVVCVIRTFIDTFYVIHIIYYLITETIAPRSQASLRGEIVVHSKATLKTRLLFHFIVDIISVLPIPQVVVLTLIPLSASLVSERILKWIILSQYVPRIIRMYPLYKEVTRAFGTVAESKRVGAALNFFLYMLHSYVCGAFWYLSSIERKSTCWRAACARTSDCNLTVTDLLCKRAGSDNIRFLNTSCPLIDPAQITNSTDFDFGMYIDALKSGVLEVKPKDFPRKFVYCFWWGLRNISALGQNLETSNSAGEIFFAIIICVSGLLLFAVLIGNVQKYLQSSTTRVDEMEEKKRDTEKWMSYREIPEYLKERIRRFEDYKWRRTKGTEEEALLRSLPKDLRLETKRYLFLKLLKKVPLLQAMDDQLLDALCARLKTVHYTEKSYIVREGEPVEDMLFIMRGNLISTTTYGGRTGFFNSVDLIAGDSCGDLLTWALYSLSSQFPISSRTVQALTEVEGFVISADDLKFVATQYRRLHSKQLQHMFRFYSLQWQTWAACFIQAAWKRHCRRKLSKALREEEGKLHNTLQNDDSGGNKLNLGAAIYA.

Residues 1 to 43 are Cytoplasmic-facing; it reads MNLQRRKFVRLDSTGVDGKLKSVRGRLKKVYGKMKTLENWRKT. The chain crosses the membrane as a helical span at residues 44-64; that stretch reads VLLACVVALAIDPLFLFIPLI. Residues 65–76 lie on the Extracellular side of the membrane; the sequence is DSQRFCFTFDKT. A helical transmembrane segment spans residues 77–97; sequence LVAVVCVIRTFIDTFYVIHII. Residues 98-128 lie on the Cytoplasmic side of the membrane; sequence YYLITETIAPRSQASLRGEIVVHSKATLKTR. Residues 129–149 traverse the membrane as a helical segment; sequence LLFHFIVDIISVLPIPQVVVL. Topologically, residues 150–162 are extracellular; sequence TLIPLSASLVSER. The chain crosses the membrane as a helical span at residues 163–183; that stretch reads ILKWIILSQYVPRIIRMYPLY. Residues 184–198 lie on the Cytoplasmic side of the membrane; it reads KEVTRAFGTVAESKR. Residues 199-219 traverse the membrane as a helical segment; that stretch reads VGAALNFFLYMLHSYVCGAFW. At 220 to 329 the chain is on the extracellular side; sequence YLSSIERKST…QNLETSNSAG (110 aa). A helical membrane pass occupies residues 330–350; that stretch reads EIFFAIIICVSGLLLFAVLIG. Residues 351 to 621 are Cytoplasmic-facing; sequence NVQKYLQSST…KLNLGAAIYA (271 aa). A nucleoside 3',5'-cyclic phosphate-binding positions include 435–556 and aspartate 506; that span reads LLQA…HSKQ. Residues 549-564 are calmodulin-binding; sequence YRRLHSKQLQHMFRFY. One can recognise an IQ domain in the interval 569–598; that stretch reads QTWAACFIQAAWKRHCRRKLSKALREEEGK.

It belongs to the cyclic nucleotide-gated cation channel (TC 1.A.1.5) family. In terms of assembly, homotetramer or heterotetramer.

It is found in the cell membrane. Functionally, putative cyclic nucleotide-gated ion channel. The chain is Cyclic nucleotide-gated ion channel 11 (CNGC11) from Arabidopsis thaliana (Mouse-ear cress).